Here is a 214-residue protein sequence, read N- to C-terminus: External core antigen (214 aa).

An N-terminal signal peptide occupies residues 1-19 (MQLFHLCLIISCTCPTIQA). Positions 25–27 (GWL) are HBEAG. The segment at 165 to 214 (NAPILSTLPETTVVRRRDRGRSPRRRTPSPRRRRSQSPRRRRSQSRESQC) is disordered. Over residues 178–207 (VRRRDRGRSPRRRTPSPRRRRSQSPRRRRS) the composition is skewed to basic residues. The stretch at 186-192 (SPRRRTP) is one 1; half-length repeat. Residues 186 to 208 (SPRRRTPSPRRRRSQSPRRRRSQ) form a 3 X 8 AA repeats of S-P-R-R-R-R-S-Q region. A propeptide spanning residues 186 to 214 (SPRRRTPSPRRRRSQSPRRRRSQSRESQC) is cleaved from the precursor. Tandem repeats lie at residues 193 to 200 (SPRRRRSQ) and 201 to 208 (SPRRRRSQ).

Belongs to the orthohepadnavirus precore antigen family. As to quaternary structure, homodimerizes. Phosphorylated. Post-translationally, cleaved by host furin.

The protein localises to the secreted. Its subcellular location is the host nucleus. Its function is as follows. May regulate immune response to the intracellular capsid in acting as a T-cell tolerogen, by having an immunoregulatory effect which prevents destruction of infected cells by cytotoxic T-cells. This immune regulation may predispose to chronicity during perinatal infections and prevent severe liver injury during adult infections. The protein is External core antigen of Homo sapiens (Human).